An 873-amino-acid chain; its full sequence is Zinc fingers and homeoboxes protein 1 (873 aa).

Positions 24-63 are disordered; sequence LISDLDEGPPVLTPVENTRAESISSDEEVHESVDSDNQQN. Thr36 is subject to Phosphothreonine. Phosphoserine occurs at positions 45, 47, and 48. C2H2-type zinc fingers lie at residues 70–93 and 102–125; these read YECKYCTFQTPDLNMFTFHVDSEH and YVCVECNFLTKRYDALSEHNLKYH. Lys159 is covalently cross-linked (Glycyl lysine isopeptide (Lys-Gly) (interchain with G-Cter in SUMO2)). Ser202 bears the Phosphoserine mark. Positions 202 to 236 are disordered; the sequence is SVEDVPEEKENEIKPDREEIVENPSSSASESNTST. The span at 212–221 shows a compositional bias: basic and acidic residues; the sequence is NEIKPDREEI. Positions 223-236 are enriched in low complexity; sequence ENPSSSASESNTST. The required for dimerization stretch occupies residues 272-432; sequence NSNLIPKVLI…QNNIQKSQVP (161 aa). Residues 272 to 564 are required for interaction with NFYA; it reads NSNLIPKVLI…AQPKQSWNPF (293 aa). The segment at residues 284–346 is a DNA-binding region (homeobox 1); that stretch reads NSIPTYNAAL…LKHGVSWTPE (63 aa). Glycyl lysine isopeptide (Lys-Gly) (interchain with G-Cter in SUMO2) cross-links involve residues Lys441, Lys454, Lys485, and Lys629. DNA-binding regions (homeobox) lie at residues 464–526 and 569–630; these read SFGI…KSNQ and PQKF…EEKM. Disordered regions lie at residues 626–667 and 732–770; these read KEEK…ICKK and SSMNGLSSLRKRGRGRPKGRGRGRPRGRPRGSKRINNWD. Ser648 carries the phosphoserine modification. The segment at residues 660–722 is a DNA-binding region (homeobox 4); that stretch reads STGKICKKTP…YAWKNGNLKW (63 aa). Positions 734–768 are required for nuclear localization; sequence MNGLSSLRKRGRGRPKGRGRGRPRGRPRGSKRINN. Over residues 740–764 the composition is skewed to basic residues; sequence LRKRGRGRPKGRGRGRPRGRPRGSK. Ser774 is modified (phosphoserine). The homeobox 5 DNA-binding region spans 777-832; the sequence is KFKTGTAILKDYYLKHKFLNEQDLDELVNKSHMGYEQVREWFAERQRRSELGIELF. The disordered stretch occupies residues 829–873; it reads IELFEENEEEDEVIDDQEEDEEETDDSDTWEPPRHVKRKLSKSDD. The segment covering 831-857 has biased composition (acidic residues); sequence LFEENEEEDEVIDDQEEDEEETDDSDT. The interval 831–873 is required for repressor activity; that stretch reads LFEENEEEDEVIDDQEEDEEETDDSDTWEPPRHVKRKLSKSDD. Residues 863 to 873 are compositionally biased toward basic residues; it reads HVKRKLSKSDD.

The protein belongs to the ZHX family. In terms of assembly, forms homodimers. Heterodimer (via HD1 domain) with ZHX2 (via HD1 domain). Also forms a heterodimer with ZHX3 which is a prerequisite for repressor activity. Interacts with ATF7IP and NFYA. Interacts (via homeobox domains) with DNMT3B (via PWWP domain). In terms of tissue distribution, ubiquitously expressed. Expressed in podocytes.

The protein resides in the nucleus. Functionally, acts as a transcriptional repressor. Increases DNMT3B-mediated repressive transcriptional activity when DNMT3B is tethered to DNA. May link molecule between DNMT3B and other co-repressor proteins. This chain is Zinc fingers and homeoboxes protein 1 (ZHX1), found in Homo sapiens (Human).